The following is a 907-amino-acid chain: Androgen receptor (907 aa).

The interval 1-545 (MEVQLGLGRV…PIDYYFPPQK (545 aa)) is modulating. Residues 1-574 (MEVQLGLGRV…GSCKVFFKRA (574 aa)) are interaction with ZNF318. Disordered regions lie at residues 36–152 (NPGP…LSLL) and 200–231 (QQQE…YLGG). Residues 55–76 (QQQQQQQQQQETSPRQQQQQQQ) are compositionally biased toward low complexity. Position 67 is a phosphoserine; by CDK9 (S67). The residue at position 81 (S81) is a Phosphoserine. Over residues 123-134 (TSATGKGLQQQQ) the composition is skewed to polar residues. The span at 200 to 224 (QQQEVVSEGSSSGRAREAAGASTSS) shows a compositional bias: low complexity. Residue Y228 is modified to Phosphotyrosine; by CSK. S261 bears the Phosphoserine mark. Residue Y272 is modified to Phosphotyrosine; by CSK and TNK2. Phosphotyrosine; by CSK is present on residues Y310, Y349, Y360, and Y365. Y366 bears the Phosphotyrosine; by CSK and TNK2 mark. K389 participates in a covalent cross-link: Glycyl lysine isopeptide (Lys-Gly) (interchain with G-Cter in SUMO). At Y396 the chain carries Phosphotyrosine; by CSK. K508 is covalently cross-linked (Glycyl lysine isopeptide (Lys-Gly) (interchain with G-Cter in SUMO)). Residues Y522 and Y539 each carry the phosphotyrosine; by CSK modification. The interval 539-906 (YYFPPQKTCL…GKVKPIYFHT (368 aa)) is interaction with LPXN. The nuclear receptor DNA-binding region spans 546 to 619 (TCLICGDEAS…AGMTLGARKL (74 aa)). NR C4-type zinc fingers lie at residues 547 to 567 (CLIC…CGSC) and 583 to 607 (CASR…LRKC). The interaction with HIPK3 stretch occupies residues 559–649 (YGALTCGSCK…TEEPTQKLTV (91 aa)). Residues 579 to 906 (QKYLCASRND…GKVKPIYFHT (328 aa)) form an interaction with CCAR1 region. Positions 612-906 (MTLGARKLKK…GKVKPIYFHT (295 aa)) are interaction with KAT7. Position 638 is a phosphoserine; by STK4/MST1 (S638). The region spanning 656-887 (ECQPIFLNVL…DFPEMMAEII (232 aa)) is the NR LBD domain. Residues N693 and R740 each contribute to the 17beta-hydroxy-5alpha-androstan-3-one site. Glycyl lysine isopeptide (Lys-Gly) (interchain with G-Cter in ubiquitin) cross-links involve residues K833 and K835. Residue T865 coordinates 17beta-hydroxy-5alpha-androstan-3-one. Y903 is modified (phosphotyrosine; by CSK).

Belongs to the nuclear hormone receptor family. NR3 subfamily. In terms of assembly, binds DNA as a homodimer. Part of a ternary complex containing AR, EFCAB6/DJBP and PARK7. Interacts with HIPK3 and NR0B2 in the presence of androgen. The ligand binding domain interacts with KAT7/HBO1 in the presence of dihydrotestosterone. Interacts with EFCAB6/DJBP, PQBP1, RANBP9, RBAK, SPDEF, SRA1, TGFB1I1 and RREB1. Interacts with ZMIZ1/ZIMP10 and ZMIZ2/ZMIP7 which both enhance its transactivation activity. Interacts with SLC30A9 and RAD54L2/ARIP4. Interacts with MACROD1 (via macro domain). Interacts via the ligand-binding domain with LXXLL and FXXLF motifs from NCOA1, NCOA2, NCOA3 and MAGEA11. Interacts (via nuclear receptor DNA binding domain and nuclear receptor ligand binding domain) with NCOA4. The AR N-terminal poly-Gln region binds Ran resulting in enhancement of AR-mediated transactivation. Ran-binding decreases as the poly-Gln length increases. Interacts with HIP1 (via coiled coil domain). Interacts (via ligand-binding domain) with TRIM68. Interacts with TNK2. Interacts with USP26. Interacts with RNF6. Interacts (regulated by RNF6 probably through polyubiquitination) with RNF14; regulates AR transcriptional activity. Interacts with PRMT2 and TRIM24. Interacts with RACK1. Interacts with RANBP10; this interaction enhances dihydrotestosterone-induced AR transcriptional activity. Interacts with PRPF6 in a hormone-independent way; this interaction enhances dihydrotestosterone-induced AR transcriptional activity. Interacts with STK4/MST1. Interacts with ZIPK/DAPK3. Interacts with LPXN. Interacts with MAK. Part of a complex containing AR, MAK and NCOA3. Interacts with CRY1. Interacts with CCAR1 and GATA2. Interacts with ZNF318. Interacts with BUD31. Interacts with ARID4A. Interacts with ARID4B. Interacts (via NR LBD domain) with ZBTB7A; the interaction is direct and androgen-dependent. Interacts with NCOR1. Interacts with NCOR2. Interacts witH CRY2 in a ligand-dependent manner. Post-translationally, phosphorylated in prostate cancer cells in response to several growth factors including EGF. Phosphorylation is induced by c-Src kinase (CSK). Tyr-522 is one of the major phosphorylation sites and an increase in phosphorylation and Src kinase activity is associated with prostate cancer progression. Phosphorylation by TNK2 enhances the DNA-binding and transcriptional activity. Phosphorylation at Ser-67 by CDK9 regulates AR promoter selectivity and cell growth. Sumoylated on Lys-389 (major) and Lys-508. Ubiquitinated. Deubiquitinated by USP26. 'Lys-6' and 'Lys-27'-linked polyubiquitination by RNF6 modulates AR transcriptional activity and specificity. In terms of processing, palmitoylated by ZDHHC7 and ZDHHC21. Palmitoylation is required for plasma membrane targeting and for rapid intracellular signaling via ERK and AKT kinases and cAMP generation.

Its subcellular location is the nucleus. The protein resides in the cytoplasm. Steroid hormone receptors are ligand-activated transcription factors that regulate eukaryotic gene expression and affect cellular proliferation and differentiation in target tissues. Transcription factor activity is modulated by bound coactivator and corepressor proteins like ZBTB7A that recruits NCOR1 and NCOR2 to the androgen response elements/ARE on target genes, negatively regulating androgen receptor signaling and androgen-induced cell proliferation. Transcription activation is also down-regulated by NR0B2. Activated, but not phosphorylated, by HIPK3 and ZIPK/DAPK3. The sequence is that of Androgen receptor (AR) from Canis lupus familiaris (Dog).